The sequence spans 256 residues: MIRLETMKVVAQEEIAPAIFELVLEGEMVEAMRAGQFLHLRVPDDAHLLRRPISISSIDKANKQCHLIYRIEGAGTAIFSTLSQGDTLDVMGPQGNGFDLSDLDEQNQVLLVGGGIGVPPLLEVAKELHERGVKVVTVLGFANKDAVILKTELAQYGQVFVTTDDGSYGIKGNVSVVINDLDSQFDAVYSCGAPGMMKYINQTFDDHPRAYLSLESRMACGMGACYACVLKVPESETVSQRVCEDGPVFRTGTVVL.

Residues 2–100 (IRLETMKVVA…MGPQGNGFDL (99 aa)) form the FAD-binding FR-type domain. Residues 51–54 (RPIS), 68–70 (IYR), and 75–76 (GT) contribute to the FAD site. Cysteine 220, cysteine 225, cysteine 228, and cysteine 243 together coordinate [2Fe-2S] cluster.

This sequence belongs to the PyrK family. In terms of assembly, heterotetramer of 2 PyrK and 2 PyrD type B subunits. It depends on [2Fe-2S] cluster as a cofactor. FAD serves as cofactor.

Its pathway is pyrimidine metabolism; UMP biosynthesis via de novo pathway; orotate from (S)-dihydroorotate (NAD(+) route): step 1/1. Responsible for channeling the electrons from the oxidation of dihydroorotate from the FMN redox center in the PyrD type B subunit to the ultimate electron acceptor NAD(+). In Streptococcus pneumoniae (strain ATCC BAA-255 / R6), this protein is Dihydroorotate dehydrogenase B (NAD(+)), electron transfer subunit.